Consider the following 704-residue polypeptide: PHD finger protein MALE MEIOCYTE DEATH 1 (704 aa).

The segment at 606 to 656 (MVKCICRARDDDGERMISCDVCEVWQHTRCCGIDDSDTLPPLFVCSNCCEE) adopts a PHD-type zinc-finger fold. Positions 609, 611, 624, 627, 632, 635, 650, and 653 each coordinate Zn(2+).

In terms of assembly, interacts with JMJ16 in the nucleus of male meiocytes, especially on pachytene chromosomes. In terms of tissue distribution, expressed in inflorescence, specifically in male meiocytes.

Its subcellular location is the nucleus. Its function is as follows. Probable transcription factor required for chromosome organization and progression during male meiosis (e.g. microsporogenesis). Necessary for fertility and meiotic progressive compaction of prophase I chromosomes to metaphase I bivalents. Together with JMJ16, promotes gene expression in male meiocytes in an H3K9me3-dependent manner, and contributes to meiotic chromosome condensation by triggering some condensin promoters (e.g. CAP-D3 and CAP-H). The chain is PHD finger protein MALE MEIOCYTE DEATH 1 from Arabidopsis thaliana (Mouse-ear cress).